Consider the following 186-residue polypeptide: MKKFSLIVAVCANGGIGIKGDLPWRLRQELKYFSRMTKKIQDSGKRNAIIMGRKTYFGVPESKRPLPERLNIILTRDPSANAYPSEVMVCTSMQEALKKLDEAPLVNEIENVWIVGGNAVYKEAMQSDRCHRIYLTEIKETFECDAFFPEITSDFQLVKNDDDVPEDIQEENGIQYQYRIYEKVPK.

The region spanning 3–183 is the DHFR domain; the sequence is KFSLIVAVCA…IQYQYRIYEK (181 aa). NADP(+) contacts are provided by residues alanine 9 and 15 to 21; that span reads GIGIKGD. A substrate-binding site is contributed by 29–34; it reads ELKYFS. An NADP(+)-binding site is contributed by 53–55; sequence RKT. A substrate-binding site is contributed by arginine 69. Residues 75–77 and 116–123 each bind NADP(+); these read TRD and GGNAVYKE.

The protein belongs to the dihydrofolate reductase family.

The enzyme catalyses (6S)-5,6,7,8-tetrahydrofolate + NADP(+) = 7,8-dihydrofolate + NADPH + H(+). It participates in cofactor biosynthesis; tetrahydrofolate biosynthesis; 5,6,7,8-tetrahydrofolate from 7,8-dihydrofolate: step 1/1. Functionally, key enzyme in folate metabolism. Catalyzes an essential reaction for de novo glycine and purine synthesis, and for DNA precursor synthesis. This Aedes albopictus (Asian tiger mosquito) protein is Dihydrofolate reductase (DHFR).